A 333-amino-acid polypeptide reads, in one-letter code: Sphingomyelinase C (333 aa).

The first 26 residues, 1–26, serve as a signal peptide directing secretion; that stretch reads MKGKLLKGVLSLGVGLGALYSGTSAQ. An intrachain disulfide couples Cys-150 to Cys-186.

It belongs to the neutral sphingomyelinase family. Mg(2+) serves as cofactor. In terms of processing, the N-terminus is blocked.

The protein resides in the secreted. The enzyme catalyses a sphingomyelin + H2O = phosphocholine + an N-acylsphing-4-enine + H(+). With respect to regulation, activated by cobalt and manganese ions. Its function is as follows. Required, with sphingomyelinase, to effect target cell lysis (hemolysis). The polypeptide is Sphingomyelinase C (cerB) (Bacillus cereus).